The primary structure comprises 64 residues: Prokaryotic ubiquitin-like protein Pup (64 aa).

Residues 1–11 (MAQEQTKRGGG) show a composition bias toward basic and acidic residues. A disordered region spans residues 1–36 (MAQEQTKRGGGGDDDDVTDLGGPAGQERREKLAEDT). The segment at 21–58 (GGPAGQERREKLAEDTDDLLDEIDDVLEENAEDFVRAY) is ARC ATPase binding. The stretch at 24–52 (AGQERREKLAEDTDDLLDEIDDVLEENAE) forms a coiled coil. Position 64 is a deamidated glutamine (Q64). An Isoglutamyl lysine isopeptide (Gln-Lys) (interchain with K-? in acceptor proteins) cross-link involves residue Q64.

This sequence belongs to the prokaryotic ubiquitin-like protein family. Strongly interacts with the proteasome-associated ATPase ARC through a hydrophobic interface; the interacting region of Pup lies in its C-terminal half. There is one Pup binding site per ARC hexamer ring. Post-translationally, is modified by deamidation of its C-terminal glutamine to glutamate by the deamidase Dop, a prerequisite to the subsequent pupylation process.

It participates in protein degradation; proteasomal Pup-dependent pathway. In terms of biological role, protein modifier that is covalently attached to lysine residues of substrate proteins, thereby targeting them for proteasomal degradation. The tagging system is termed pupylation. The chain is Prokaryotic ubiquitin-like protein Pup from Mycobacteroides abscessus (strain ATCC 19977 / DSM 44196 / CCUG 20993 / CIP 104536 / JCM 13569 / NCTC 13031 / TMC 1543 / L948) (Mycobacterium abscessus).